Here is a 257-residue protein sequence, read N- to C-terminus: Imidazole glycerol phosphate synthase subunit HisF (257 aa).

Residues Asp-12 and Asp-131 contribute to the active site.

The protein belongs to the HisA/HisF family. As to quaternary structure, heterodimer of HisH and HisF.

Its subcellular location is the cytoplasm. It carries out the reaction 5-[(5-phospho-1-deoxy-D-ribulos-1-ylimino)methylamino]-1-(5-phospho-beta-D-ribosyl)imidazole-4-carboxamide + L-glutamine = D-erythro-1-(imidazol-4-yl)glycerol 3-phosphate + 5-amino-1-(5-phospho-beta-D-ribosyl)imidazole-4-carboxamide + L-glutamate + H(+). It functions in the pathway amino-acid biosynthesis; L-histidine biosynthesis; L-histidine from 5-phospho-alpha-D-ribose 1-diphosphate: step 5/9. Its function is as follows. IGPS catalyzes the conversion of PRFAR and glutamine to IGP, AICAR and glutamate. The HisF subunit catalyzes the cyclization activity that produces IGP and AICAR from PRFAR using the ammonia provided by the HisH subunit. The chain is Imidazole glycerol phosphate synthase subunit HisF from Paraburkholderia xenovorans (strain LB400).